Consider the following 290-residue polypeptide: Nucleotide-binding protein Xfasm12_0753 (290 aa).

ATP is bound at residue 13 to 20 (GLSGSGKS). 65 to 68 (DIRS) provides a ligand contact to GTP.

The protein belongs to the RapZ-like family.

Displays ATPase and GTPase activities. In Xylella fastidiosa (strain M12), this protein is Nucleotide-binding protein Xfasm12_0753.